The sequence spans 310 residues: Acetaldehyde dehydrogenase 1 (310 aa).

Serine 12–isoleucine 15 contacts NAD(+). Cysteine 127 functions as the Acyl-thioester intermediate in the catalytic mechanism. NAD(+)-binding positions include serine 163–asparagine 171 and asparagine 282.

It belongs to the acetaldehyde dehydrogenase family.

The enzyme catalyses acetaldehyde + NAD(+) + CoA = acetyl-CoA + NADH + H(+). This chain is Acetaldehyde dehydrogenase 1, found in Mycobacterium sp. (strain KMS).